Consider the following 784-residue polypeptide: SWI/SNF complex subunit SWI3C homolog (784 aa).

A compositionally biased stretch (polar residues) spans 1–10; it reads MPRKASSTSD. A disordered region spans residues 1-68; that stretch reads MPRKASSTSD…PEDADDETLA (68 aa). Residues 24–39 show a composition bias toward low complexity; sequence ASPSPSNRSSAAAAAA. Over residues 43 to 66 the composition is skewed to acidic residues; that stretch reads DDSDSAAVNEDDDSAVPEDADDET. Positions 185 to 284 constitute an SWIRM domain; that stretch reads HVVPKHSDWF…YLASGSVHRG (100 aa). The ZZ-type; degenerate zinc-finger motif lies at 355-409; that stretch reads LSESSCSYCLQPLTSLHYQSLKEADIALCSDCFHDARYITGHSSLDFQRIDGDND. The Zn(2+) site is built by C360, C363, C383, and C386. The 52-residue stretch at 413–464 folds into the SANT domain; it reads NDGDSWTDQETLLLLEGIEKYNDNWNNIAEHVGTKSKAQCIYHFIRLPVEDG. 2 disordered regions span residues 667-702 and 760-784; these read LASP…SMPQ and GMPN…SSVG. The segment covering 675-695 has biased composition (low complexity); it reads PGGSTSTMSSNPMSMSPRPMG.

In terms of assembly, interacts with LFR. Interacts with NMCP1.

The protein localises to the nucleus. It localises to the nucleoplasm. Component of a multiprotein complex equivalent of the SWI/SNF complex, an ATP-dependent chromatin-remodeling complex, which is required for the positive and negative regulation of gene expression of a large number of genes. It changes chromatin structure by altering DNA-histone contacts within a nucleosome, leading eventually to a change in nucleosome position, thus facilitating or repressing binding of gene-specific transcription factors. May be involved in positive response to drought stress and modulation of root growth through its interaction with NMCP1. In Oryza sativa subsp. japonica (Rice), this protein is SWI/SNF complex subunit SWI3C homolog.